The sequence spans 246 residues: Dihydroorotate dehydrogenase B (NAD(+)), electron transfer subunit (246 aa).

One can recognise an FAD-binding FR-type domain in the interval 3–97; sequence EKYTVEKVYE…TGPLGNGFNV (95 aa). Residues 50–53 and 72–73 each bind FAD; these read RPIS and GT. [2Fe-2S] cluster contacts are provided by cysteine 211, cysteine 216, cysteine 219, and cysteine 231.

This sequence belongs to the PyrK family. As to quaternary structure, heterotetramer of 2 PyrK and 2 PyrD type B subunits. [2Fe-2S] cluster is required as a cofactor. The cofactor is FAD.

It participates in pyrimidine metabolism; UMP biosynthesis via de novo pathway; orotate from (S)-dihydroorotate (NAD(+) route): step 1/1. Its function is as follows. Responsible for channeling the electrons from the oxidation of dihydroorotate from the FMN redox center in the PyrD type B subunit to the ultimate electron acceptor NAD(+). This Clostridium acetobutylicum (strain ATCC 824 / DSM 792 / JCM 1419 / IAM 19013 / LMG 5710 / NBRC 13948 / NRRL B-527 / VKM B-1787 / 2291 / W) protein is Dihydroorotate dehydrogenase B (NAD(+)), electron transfer subunit.